The sequence spans 307 residues: HTH-type transcriptional regulator DmlR (307 aa).

One can recognise an HTH lysR-type domain in the interval 5–62; the sequence is PLLNDLRVFMLVARRAGFAAVAEELGVSPAFVSKRIALLEQTLNVVLLHRTTRRVTIT. Positions 22–41 form a DNA-binding region, H-T-H motif; sequence FAAVAEELGVSPAFVSKRIA.

It belongs to the LysR transcriptional regulatory family.

Transcriptional regulator required for the aerobic growth on D-malate as the sole carbon source. Induces the expression of dmlA in response to D-malate or L- or meso-tartrate. Negatively regulates its own expression. This is HTH-type transcriptional regulator DmlR (dmlR) from Escherichia coli (strain K12).